A 470-amino-acid polypeptide reads, in one-letter code: Nuclear receptor subfamily 0 group B member 1 (470 aa).

3 repeat units span residues 1-67, 68-133, and 134-200. Positions 1-253 are 4 X 67 AA tandem repeats; that stretch reads MAGENHQWQG…RPVALKNPQV (253 aa). 3 short sequence motifs (LXXLL motif) span residues 13–17, 80–84, and 146–150; these read LYNML, LYSML, and LYSLL. The stretch at 201–253 is one 4; truncated repeat; sequence FCGEDHPQQGSTLYCMPTSTNQAQAAPEERPRAPWWDASSGALRPVALKNPQV. Residues 215-469 enclose the NR LBD domain; that stretch reads CMPTSTNQAQ…DMMLEMLCTK (255 aa). The AF-2 motif motif lies at 461 to 466; the sequence is MMLEML.

It belongs to the nuclear hormone receptor family. NR0 subfamily. In terms of assembly, homodimer. Interacts with NR5A1, NR5A2, NR0B2 and with COPS2. Interacts with ESRRB; represses ESRRB activity at the GATA6 promoter.

The protein localises to the nucleus. Its subcellular location is the cytoplasm. Nuclear receptor that lacks a DNA-binding domain and acts as a corepressor that inhibits the transcriptional activity of other nuclear receptors through heterodimeric interactions. Component of a cascade required for the development of the hypothalamic-pituitary-adrenal-gonadal axis. May also have a role in the development of the embryo and in the maintenance of embryonic stem cell pluripotency. The chain is Nuclear receptor subfamily 0 group B member 1 (NR0B1) from Pongo pygmaeus (Bornean orangutan).